The primary structure comprises 364 residues: Methylthioribose-1-phosphate isomerase (364 aa).

Residue Asp254 is the Proton donor of the active site.

Belongs to the eIF-2B alpha/beta/delta subunits family. MtnA subfamily.

The protein localises to the cytoplasm. It localises to the nucleus. The catalysed reaction is 5-(methylsulfanyl)-alpha-D-ribose 1-phosphate = 5-(methylsulfanyl)-D-ribulose 1-phosphate. It participates in amino-acid biosynthesis; L-methionine biosynthesis via salvage pathway; L-methionine from S-methyl-5-thio-alpha-D-ribose 1-phosphate: step 1/6. Catalyzes the interconversion of methylthioribose-1-phosphate (MTR-1-P) into methylthioribulose-1-phosphate (MTRu-1-P). This is Methylthioribose-1-phosphate isomerase from Drosophila sechellia (Fruit fly).